The following is a 157-amino-acid chain: Crossover junction endodeoxyribonuclease RuvC (157 aa).

Residues Asp7, Glu70, and Asp142 contribute to the active site. Asp7, Glu70, and Asp142 together coordinate Mg(2+).

The protein belongs to the RuvC family. As to quaternary structure, homodimer which binds Holliday junction (HJ) DNA. The HJ becomes 2-fold symmetrical on binding to RuvC with unstacked arms; it has a different conformation from HJ DNA in complex with RuvA. In the full resolvosome a probable DNA-RuvA(4)-RuvB(12)-RuvC(2) complex forms which resolves the HJ. Requires Mg(2+) as cofactor.

It localises to the cytoplasm. The catalysed reaction is Endonucleolytic cleavage at a junction such as a reciprocal single-stranded crossover between two homologous DNA duplexes (Holliday junction).. In terms of biological role, the RuvA-RuvB-RuvC complex processes Holliday junction (HJ) DNA during genetic recombination and DNA repair. Endonuclease that resolves HJ intermediates. Cleaves cruciform DNA by making single-stranded nicks across the HJ at symmetrical positions within the homologous arms, yielding a 5'-phosphate and a 3'-hydroxyl group; requires a central core of homology in the junction. The consensus cleavage sequence is 5'-(A/T)TT(C/G)-3'. Cleavage occurs on the 3'-side of the TT dinucleotide at the point of strand exchange. HJ branch migration catalyzed by RuvA-RuvB allows RuvC to scan DNA until it finds its consensus sequence, where it cleaves and resolves the cruciform DNA. This is Crossover junction endodeoxyribonuclease RuvC from Synechococcus sp. (strain RCC307).